A 153-amino-acid chain; its full sequence is SsrA-binding protein (153 aa).

A compositionally biased stretch (basic and acidic residues) spans 132-142; sequence ALKRKEAEREA. A disordered region spans residues 132-153; the sequence is ALKRKEAEREAQSAMKRYAKGY.

Belongs to the SmpB family.

Its subcellular location is the cytoplasm. In terms of biological role, required for rescue of stalled ribosomes mediated by trans-translation. Binds to transfer-messenger RNA (tmRNA), required for stable association of tmRNA with ribosomes. tmRNA and SmpB together mimic tRNA shape, replacing the anticodon stem-loop with SmpB. tmRNA is encoded by the ssrA gene; the 2 termini fold to resemble tRNA(Ala) and it encodes a 'tag peptide', a short internal open reading frame. During trans-translation Ala-aminoacylated tmRNA acts like a tRNA, entering the A-site of stalled ribosomes, displacing the stalled mRNA. The ribosome then switches to translate the ORF on the tmRNA; the nascent peptide is terminated with the 'tag peptide' encoded by the tmRNA and targeted for degradation. The ribosome is freed to recommence translation, which seems to be the essential function of trans-translation. This chain is SsrA-binding protein, found in Campylobacter hominis (strain ATCC BAA-381 / DSM 21671 / CCUG 45161 / LMG 19568 / NCTC 13146 / CH001A).